The following is a 119-amino-acid chain: Large ribosomal subunit protein bL20 (119 aa).

The protein belongs to the bacterial ribosomal protein bL20 family.

Its function is as follows. Binds directly to 23S ribosomal RNA and is necessary for the in vitro assembly process of the 50S ribosomal subunit. It is not involved in the protein synthesizing functions of that subunit. The sequence is that of Large ribosomal subunit protein bL20 from Shewanella halifaxensis (strain HAW-EB4).